A 269-amino-acid polypeptide reads, in one-letter code: Thiazole synthase (269 aa).

Lysine 95 serves as the catalytic Schiff-base intermediate with DXP. 1-deoxy-D-xylulose 5-phosphate-binding positions include glycine 156, 182–183 (AG), and 204–205 (NT).

This sequence belongs to the ThiG family. As to quaternary structure, homotetramer. Forms heterodimers with either ThiH or ThiS.

The protein localises to the cytoplasm. The catalysed reaction is [ThiS sulfur-carrier protein]-C-terminal-Gly-aminoethanethioate + 2-iminoacetate + 1-deoxy-D-xylulose 5-phosphate = [ThiS sulfur-carrier protein]-C-terminal Gly-Gly + 2-[(2R,5Z)-2-carboxy-4-methylthiazol-5(2H)-ylidene]ethyl phosphate + 2 H2O + H(+). It participates in cofactor biosynthesis; thiamine diphosphate biosynthesis. Functionally, catalyzes the rearrangement of 1-deoxy-D-xylulose 5-phosphate (DXP) to produce the thiazole phosphate moiety of thiamine. Sulfur is provided by the thiocarboxylate moiety of the carrier protein ThiS. In vitro, sulfur can be provided by H(2)S. The protein is Thiazole synthase of Shewanella frigidimarina (strain NCIMB 400).